We begin with the raw amino-acid sequence, 223 residues long: ATP-dependent dethiobiotin synthetase BioD (223 aa).

A Mg(2+)-binding site is contributed by Thr16. Lys37 is a catalytic residue. Ser41 provides a ligand contact to substrate. Mg(2+)-binding residues include Asp50 and Glu111. Residues Asp50, 111–114, and 171–172 contribute to the ATP site; these read EGAG and NR.

It belongs to the dethiobiotin synthetase family. As to quaternary structure, homodimer. The cofactor is Mg(2+).

The protein resides in the cytoplasm. It carries out the reaction (7R,8S)-7,8-diammoniononanoate + CO2 + ATP = (4R,5S)-dethiobiotin + ADP + phosphate + 3 H(+). The protein operates within cofactor biosynthesis; biotin biosynthesis; biotin from 7,8-diaminononanoate: step 1/2. Functionally, catalyzes a mechanistically unusual reaction, the ATP-dependent insertion of CO2 between the N7 and N8 nitrogen atoms of 7,8-diaminopelargonic acid (DAPA, also called 7,8-diammoniononanoate) to form a ureido ring. The sequence is that of ATP-dependent dethiobiotin synthetase BioD from Anaeromyxobacter sp. (strain K).